A 182-amino-acid chain; its full sequence is ATP synthase subunit delta (182 aa).

It belongs to the ATPase delta chain family. As to quaternary structure, F-type ATPases have 2 components, F(1) - the catalytic core - and F(0) - the membrane proton channel. F(1) has five subunits: alpha(3), beta(3), gamma(1), delta(1), epsilon(1). F(0) has three main subunits: a(1), b(2) and c(10-14). The alpha and beta chains form an alternating ring which encloses part of the gamma chain. F(1) is attached to F(0) by a central stalk formed by the gamma and epsilon chains, while a peripheral stalk is formed by the delta and b chains.

It localises to the cell membrane. F(1)F(0) ATP synthase produces ATP from ADP in the presence of a proton or sodium gradient. F-type ATPases consist of two structural domains, F(1) containing the extramembraneous catalytic core and F(0) containing the membrane proton channel, linked together by a central stalk and a peripheral stalk. During catalysis, ATP synthesis in the catalytic domain of F(1) is coupled via a rotary mechanism of the central stalk subunits to proton translocation. In terms of biological role, this protein is part of the stalk that links CF(0) to CF(1). It either transmits conformational changes from CF(0) to CF(1) or is implicated in proton conduction. This Desulforudis audaxviator (strain MP104C) protein is ATP synthase subunit delta.